A 153-amino-acid chain; its full sequence is ORM1-like protein 3 (153 aa).

Residues 1–21 (MNVGTAHSEVNPNTRVMNSRG) are Cytoplasmic-facing. 2 consecutive transmembrane segments (helical) span residues 22–42 (IWLS…SIPF) and 43–63 (VSVP…MYIF). Over 64–94 (LHTVKGTPFETPDQGKARLLTHWEQMDYGVQ) the chain is Cytoplasmic. A helical transmembrane segment spans residues 95–117 (FTASRKFLTITPIILYFLTSFYT). The Extracellular portion of the chain corresponds to 118 to 121 (KYDR). Residues 122–142 (VHFVINTISLLTVLIPKLPQF) form a helical membrane-spanning segment. Pro-137 is subject to Hydroxyproline. At 143-153 (HGVRLFGINKY) the chain is on the cytoplasmic side.

The protein belongs to the ORM family. In terms of assembly, ceramide-sensitive subunit of the serine palmitoyltransferase (SPT) complex, which is also composed of SPTLC1, SPTLC2/3 and SPTSSA/B. Post-translationally, when hydroxylated at Pro-137, ubiquitinated via 'Lys-48'-linkage, leading to proteasomal degradation. In endothelial cells, ORMDL3 proteasomal degradation is controlled by the sphingosine 1-phosphate receptor signaling pathway.

The protein resides in the endoplasmic reticulum membrane. Plays an essential role in the homeostatic regulation of sphingolipid de novo biosynthesis by modulating the activity of the serine palmitoyltransferase (SPT) in response to ceramide levels. When complexed to SPT, the binding of ceramides to its N-terminus stabilizes a conformation that block SPT substrate entry, hence preventing SPT catalytic activity. Through this mechanism, maintains ceramide levels at sufficient concentrations for the production of complex sphingolipids, but which prevents the accumulation of ceramides to levels that trigger apoptosis. This Danio rerio (Zebrafish) protein is ORM1-like protein 3 (ormdl3).